The following is a 317-amino-acid chain: tRNA dimethylallyltransferase (317 aa).

Position 14–21 (14–21 (GPTASGKS)) interacts with ATP. 16 to 21 (TASGKS) serves as a coordination point for substrate. Interaction with substrate tRNA stretches follow at residues 39–42 (DSVL) and 163–167 (QRIQR).

Belongs to the IPP transferase family. As to quaternary structure, monomer. Mg(2+) is required as a cofactor.

The catalysed reaction is adenosine(37) in tRNA + dimethylallyl diphosphate = N(6)-dimethylallyladenosine(37) in tRNA + diphosphate. In terms of biological role, catalyzes the transfer of a dimethylallyl group onto the adenine at position 37 in tRNAs that read codons beginning with uridine, leading to the formation of N6-(dimethylallyl)adenosine (i(6)A). This Xylella fastidiosa (strain M23) protein is tRNA dimethylallyltransferase.